Here is a 298-residue protein sequence, read N- to C-terminus: MPEAGLAEAFGVTEEARAKINLALHVTGQRADGYHLLDMLVTFADCGDRLGFLPAQTDAFTLSGRFGEMLAGDGGTNLVLRARDLLREQFGALAFPVHIHLQKNLPVASGIGGGSADAAAALRGLMRLWGMSLPVEALASLALKLGADVPMCLESRPLIARGIGEEIEAVPDLPAFAMVLANPLKGVSTPEVFRRLTTKNNSALSLAPGLSGSAGWLAVIDAARNDLEPPARQLVPEIAVISAMLQARGALLTRMSGSGATCFGIFASMAEAQDAAAALHGERPDWYFQATETVSGGM.

Residue K19 is part of the active site. 106-116 serves as a coordination point for ATP; the sequence is PVASGIGGGSA. D148 is a catalytic residue.

Belongs to the GHMP kinase family. IspE subfamily.

It carries out the reaction 4-CDP-2-C-methyl-D-erythritol + ATP = 4-CDP-2-C-methyl-D-erythritol 2-phosphate + ADP + H(+). The protein operates within isoprenoid biosynthesis; isopentenyl diphosphate biosynthesis via DXP pathway; isopentenyl diphosphate from 1-deoxy-D-xylulose 5-phosphate: step 3/6. Catalyzes the phosphorylation of the position 2 hydroxy group of 4-diphosphocytidyl-2C-methyl-D-erythritol. The protein is 4-diphosphocytidyl-2-C-methyl-D-erythritol kinase of Rhizobium leguminosarum bv. trifolii (strain WSM2304).